The following is a 177-amino-acid chain: Peroxiredoxin-2 (177 aa).

Ala2 is modified (N-acetylalanine). The Thioredoxin domain maps to 6 to 164 (ARIGKPAPDF…ALRLVQAFQY (159 aa)). The active-site Cysteine sulfenic acid (-SOH) intermediate is the Cys51. Ser112 carries the post-translational modification Phosphoserine.

It belongs to the peroxiredoxin family. AhpC/Prx1 subfamily. In terms of assembly, homodimer; disulfide-linked, upon oxidation. 5 homodimers assemble to form a ring-like decamer. Interacts with TIPIN. In terms of processing, the enzyme can be inactivated by further oxidation of the cysteine sulfenic acid (C(P)-SOH) to sulphinic acid (C(P)-SO2H) instead of its condensation to a disulfide bond. It can be reactivated by forming a transient disulfide bond with sulfiredoxin SRXN1, which reduces the cysteine sulfinic acid in an ATP- and Mg-dependent manner. Acetylation increases resistance to transition to high molecular-mass complexes. Deacetylated by HDAC6 which decreases reducing activity.

The protein localises to the cytoplasm. The catalysed reaction is a hydroperoxide + [thioredoxin]-dithiol = an alcohol + [thioredoxin]-disulfide + H2O. Functionally, thiol-specific peroxidase that catalyzes the reduction of hydrogen peroxide and organic hydroperoxides to water and alcohols, respectively. Plays a role in cell protection against oxidative stress by detoxifying peroxides and as sensor of hydrogen peroxide-mediated signaling events. Might participate in the signaling cascades of growth factors and tumor necrosis factor-alpha by regulating the intracellular concentrations of H(2)O(2). In Pongo abelii (Sumatran orangutan), this protein is Peroxiredoxin-2 (PRDX2).